The following is a 158-amino-acid chain: Snaclec mucetin subunit alpha (158 aa).

The first 23 residues, 1–23 (MGRFTFVSFGLLVVFLSLSGTGA), serve as a signal peptide directing secretion. Intrachain disulfides connect Cys27-Cys38, Cys55-Cys152, and Cys127-Cys144. Positions 34-153 (YDRYCYQAFS…CGRENPFVCK (120 aa)) constitute a C-type lectin domain.

The protein belongs to the snaclec family. Dimer and tetramer of heterodimers of alpha and beta subunits ((alphabeta)(2) and (alphabeta)(4)); disulfide-linked. These two multimeric forms are found. In terms of processing, the complex is glycosylated. Expressed by the venom gland.

It is found in the secreted. Its function is as follows. Potent platelet activator that acts via GPIb (GP1BA/GP1BB). After activation by the toxin, the receptor is redistributed on platelet surface thanks to cytoskeletal translocation. The indirect activation of integrin alpha-IIb/beta-3 (ITGA2B/ITGB3) also induced by the toxin is downstream the cytoskeletal translocation of GPIb. This chain is Snaclec mucetin subunit alpha, found in Protobothrops mucrosquamatus (Taiwan habu).